The primary structure comprises 421 residues: Battenin (421 aa).

A run of 5 helical transmembrane segments spans residues 13 to 35 (SFHFMGNINNFSYCVVNAASGNL), 47 to 67 (IILWANIAFGLVSRLVNTFLI), 74 to 96 (LKIVVNCLFMSIGLIGVALSVYV), 101 to 123 (CIAAIAFVGIASSFGESVILSYM), and 137 to 157 (GTGIAGVCGSLFYIAMVAAGL). N-linked (GlcNAc...) asparagine glycosylation is present at asparagine 159. The helical transmembrane segment at 161–181 (TIFYMMLPTVAVYFLLFFFGL) threads the bilayer. Positions 190 to 211 (DRTDNHNNSNNSSNNSKYTEKQ) are disordered. Positions 195 to 205 (HNNSNNSSNNS) are enriched in low complexity. Asparagine 196, asparagine 199, asparagine 200, and asparagine 203 each carry an N-linked (GlcNAc...) asparagine glycan. 5 helical membrane-spanning segments follow: residues 248–268 (LVWFNAVNLALVYFFEYVASV), 284–304 (FFIANAFAIFSFCYQLGVLIS), 313–333 (IKHIGVITILQGINMVFWIIQ), 338–358 (MVTSVWVLFILMVYCGLLGGA), and 382–402 (INYAALLVTVGITLAACFILV).

Belongs to the battenin family.

Its subcellular location is the lysosome membrane. In Dictyostelium discoideum (Social amoeba), this protein is Battenin (cln3).